The following is an 84-amino-acid chain: Small ribosomal subunit protein uS17c (84 aa).

Belongs to the universal ribosomal protein uS17 family. Part of the 30S ribosomal subunit.

It localises to the plastid. It is found in the chloroplast. Its function is as follows. One of the primary rRNA binding proteins, it binds specifically to the 5'-end of 16S ribosomal RNA. This is Small ribosomal subunit protein uS17c (rps17) from Thalassiosira pseudonana (Marine diatom).